A 206-amino-acid chain; its full sequence is Probable 5-formyltetrahydrofolate cyclo-ligase (206 aa).

ATP is bound by residues 8–12 (KSELR) and R12. Substrate is bound by residues V54, E59, and 146-150 (HGKGY). Residue 143–151 (RCGHGKGYY) participates in ATP binding. D152 and D188 together coordinate Mg(2+).

Belongs to the 5-formyltetrahydrofolate cyclo-ligase family. Monomer. Requires Mg(2+) as cofactor.

The protein localises to the cytoplasm. The catalysed reaction is (6S)-5-formyl-5,6,7,8-tetrahydrofolate + ATP = (6R)-5,10-methenyltetrahydrofolate + ADP + phosphate. Its function is as follows. Contributes to tetrahydrofolate metabolism. Helps regulate carbon flow through the folate-dependent one-carbon metabolic network that supplies carbon for the biosynthesis of purines, thymidine and amino acids. Catalyzes the irreversible conversion of 5-formyltetrahydrofolate (5-CHO-H(4)PteGlu) to yield 5,10-methenyltetrahydrofolate. This chain is Probable 5-formyltetrahydrofolate cyclo-ligase, found in Caenorhabditis elegans.